The chain runs to 357 residues: Quinolinate synthase (357 aa).

The iminosuccinate site is built by histidine 50 and serine 71. A [4Fe-4S] cluster-binding site is contributed by cysteine 116. Iminosuccinate contacts are provided by residues 142-144 (YAN) and serine 159. Cysteine 203 serves as a coordination point for [4Fe-4S] cluster. Iminosuccinate-binding positions include 229–231 (HPE) and threonine 246. Position 300 (cysteine 300) interacts with [4Fe-4S] cluster.

The protein belongs to the quinolinate synthase family. Type 1 subfamily. It depends on [4Fe-4S] cluster as a cofactor.

It is found in the cytoplasm. The enzyme catalyses iminosuccinate + dihydroxyacetone phosphate = quinolinate + phosphate + 2 H2O + H(+). It functions in the pathway cofactor biosynthesis; NAD(+) biosynthesis; quinolinate from iminoaspartate: step 1/1. Its function is as follows. Catalyzes the condensation of iminoaspartate with dihydroxyacetone phosphate to form quinolinate. The sequence is that of Quinolinate synthase from Shewanella sp. (strain ANA-3).